A 362-amino-acid polypeptide reads, in one-letter code: Holliday junction branch migration complex subunit RuvB (362 aa).

Positions 1 to 183 are large ATPase domain (RuvB-L); it reads MADSSLVGGG…FGFTGHLEFY (183 aa). Residues L22, R23, G64, K67, T68, T69, 130-132, R173, Y183, and R220 each bind ATP; that span reads EDF. T68 is a Mg(2+) binding site. A small ATPAse domain (RuvB-S) region spans residues 184–254; the sequence is SVEELELVLR…TASAALDMYE (71 aa). The tract at residues 257-362 is head domain (RuvB-H); sequence KRGLDRLDRS…PVAEWLPNGQ (106 aa). DNA-binding residues include R312 and R317.

Belongs to the RuvB family. In terms of assembly, homohexamer. Forms an RuvA(8)-RuvB(12)-Holliday junction (HJ) complex. HJ DNA is sandwiched between 2 RuvA tetramers; dsDNA enters through RuvA and exits via RuvB. An RuvB hexamer assembles on each DNA strand where it exits the tetramer. Each RuvB hexamer is contacted by two RuvA subunits (via domain III) on 2 adjacent RuvB subunits; this complex drives branch migration. In the full resolvosome a probable DNA-RuvA(4)-RuvB(12)-RuvC(2) complex forms which resolves the HJ.

It is found in the cytoplasm. It carries out the reaction ATP + H2O = ADP + phosphate + H(+). Functionally, the RuvA-RuvB-RuvC complex processes Holliday junction (HJ) DNA during genetic recombination and DNA repair, while the RuvA-RuvB complex plays an important role in the rescue of blocked DNA replication forks via replication fork reversal (RFR). RuvA specifically binds to HJ cruciform DNA, conferring on it an open structure. The RuvB hexamer acts as an ATP-dependent pump, pulling dsDNA into and through the RuvAB complex. RuvB forms 2 homohexamers on either side of HJ DNA bound by 1 or 2 RuvA tetramers; 4 subunits per hexamer contact DNA at a time. Coordinated motions by a converter formed by DNA-disengaged RuvB subunits stimulates ATP hydrolysis and nucleotide exchange. Immobilization of the converter enables RuvB to convert the ATP-contained energy into a lever motion, pulling 2 nucleotides of DNA out of the RuvA tetramer per ATP hydrolyzed, thus driving DNA branch migration. The RuvB motors rotate together with the DNA substrate, which together with the progressing nucleotide cycle form the mechanistic basis for DNA recombination by continuous HJ branch migration. Branch migration allows RuvC to scan DNA until it finds its consensus sequence, where it cleaves and resolves cruciform DNA. The sequence is that of Holliday junction branch migration complex subunit RuvB from Arthrobacter sp. (strain FB24).